The chain runs to 268 residues: Undecaprenyl-diphosphatase (268 aa).

Helical transmembrane passes span 1 to 21 (MSLIYLVVLALVQGITEFLPI), 39 to 59 (QGPLIDVMAHAGSLLAVLVYF), 85 to 105 (ALLVAASMPPIIIVAGALVAF), 110 to 130 (ALRSPRVIAIATLAFALPLWL), 144 to 164 (MSFKHAALIGIAQLFALIPGA), 187 to 207 (FSMLMAIPVIAAFGLVSLIEL), 221 to 241 (DGLIVAGLSFVTAWAAIAVLM), and 247 to 267 (IGFLPFALYRVGLGLALLVFF).

Belongs to the UppP family.

It is found in the cell inner membrane. It carries out the reaction di-trans,octa-cis-undecaprenyl diphosphate + H2O = di-trans,octa-cis-undecaprenyl phosphate + phosphate + H(+). Its function is as follows. Catalyzes the dephosphorylation of undecaprenyl diphosphate (UPP). Confers resistance to bacitracin. The protein is Undecaprenyl-diphosphatase of Maricaulis maris (strain MCS10) (Caulobacter maris).